A 216-amino-acid chain; its full sequence is Transmembrane emp24 domain-containing protein eca (216 aa).

The signal sequence occupies residues 1-20 (MRNQFICVALLLCALNSACG). Over 21–183 (LYFHISETER…RHTSESTNSR (163 aa)) the chain is Lumenal. Residues 30-126 (RKCFIEEVPD…QLRVHLDIQV (97 aa)) enclose the GOLD domain. Residues 134–164 (ANVAQKEKLTELQLRIRQLLDQVDQITKEQN) are a coiled coil. Residues 184–203 (VLWWSLAQTVVLVCMGFWQM) form a helical membrane-spanning segment. The Cytoplasmic portion of the chain corresponds to 204–216 (RHLKSFFEAKKLV). A Prevents secretion from ER motif is present at residues 213 to 216 (KKLV).

The protein belongs to the EMP24/GP25L family.

The protein localises to the endoplasmic reticulum membrane. Functionally, eca and bai are essential, though not redundant, for dorsoventral patterning of the embryo. Specifically required during early embryogenesis for the activity of maternal tkv, while the zygotic tkv is not affected. Involved in Golgi organization. In Drosophila willistoni (Fruit fly), this protein is Transmembrane emp24 domain-containing protein eca.